The following is a 408-amino-acid chain: D-inositol 3-phosphate glycosyltransferase (408 aa).

Histidine 7 provides a ligand contact to 1D-myo-inositol 3-phosphate. UDP-N-acetyl-alpha-D-glucosamine contacts are provided by residues 13–14 (QP) and glycine 21. Residues 18-23 (DAGGMN), lysine 76, tyrosine 109, threonine 133, and arginine 153 each bind 1D-myo-inositol 3-phosphate. Arginine 227, lysine 232, and valine 288 together coordinate UDP-N-acetyl-alpha-D-glucosamine. Residues phenylalanine 297, arginine 298, and alanine 300 each contribute to the Mg(2+) site. UDP-N-acetyl-alpha-D-glucosamine contacts are provided by glutamate 310 and glutamate 318. Residue threonine 324 participates in Mg(2+) binding.

Belongs to the glycosyltransferase group 1 family. MshA subfamily. Homodimer.

It catalyses the reaction 1D-myo-inositol 3-phosphate + UDP-N-acetyl-alpha-D-glucosamine = 1D-myo-inositol 2-acetamido-2-deoxy-alpha-D-glucopyranoside 3-phosphate + UDP + H(+). In terms of biological role, catalyzes the transfer of a N-acetyl-glucosamine moiety to 1D-myo-inositol 3-phosphate to produce 1D-myo-inositol 2-acetamido-2-deoxy-glucopyranoside 3-phosphate in the mycothiol biosynthesis pathway. The sequence is that of D-inositol 3-phosphate glycosyltransferase from Paenarthrobacter aurescens (strain TC1).